An 818-amino-acid polypeptide reads, in one-letter code: METIKRMIWPKKEIFVGDFATGVNRTVPVNIFQLVCRVVLRYMRTGKIECDSDSMTKFIVELLKTDCAAKWEWFMKRRQRGDYIVPLSIASIPIIPLLSYATRVRAVSVKAFGNELSFNVRVPRPSVPKKGLLLRLAAGLALAPICALAVYATLPREKLSVFKLRTEARAHMEDEREATDCLVVEPARELKGKDGEDLLTGSRLTKVIASTGRPRRRPYAAKIAQVARAKVGYLKNSPENRLIYQRVMIEIMDKDCVRYVDRDVILPLAIGCCFVYPDGVEESAALWGSQESLGVKXGGLVRLPGVVTQINRDIPSDVLLPQEVLEVRTGPPNAKDRNIFMVAGCPSQARFLVHNHCLKNLKRGLVERVFCVERNGKLARTPQPTKGAFGRLSPFRKAVCEKVGVAHRLGYDGFLSYYSGAKLRTYTRAVESLHITPVSERDSHLTTFVKAEKISTSKGDPAPRVIQPRNPRYNVELGRYLRHMESKLMKAVDGVFGETTCIKGYTADEVGAIFRAKWDRFDKPVAIGLDASRFDQHCSVEALQYEHSFYRAMYPGNKLLGKLLEWQLHNKGKGYVPDGTITYRKEGCRMSGDINTSLGNYLLMCAMVHGYMRHLGINEFSLANCGDDCVLIVERRNLKQIQRTLPEYFLNLGYTMKVEQPVFQLEEVEFCQAHPVQFQGGWKMVRNVRTAMSKDVHCVNNIRDLATRRAWSNAQHHGGLALSAGIPVVETFYSRFKLYDVPRKHQRIDTVTNVHKWRGSGGSYVVTPESRASFWAAFGLTGDEQLALEDRLERWEMDLFGEEGVDAHEPSILDSAVA.

The RdRp catalytic domain occupies 524 to 641 (PVAIGLDASR…IVERRNLKQI (118 aa)).

This sequence belongs to the tombusviridae RNA polymerase family.

The catalysed reaction is RNA(n) + a ribonucleoside 5'-triphosphate = RNA(n+1) + diphosphate. RNA-dependent RNA polymerase that plays an essential role in the virus replication. The chain is RNA-directed RNA polymerase from Tomato bushy stunt virus (strain Cherry) (TBSV).